The chain runs to 117 residues: MDKKATRLRRAKKTRAKLGSQDRARLCVHRTPKHIYAQIISSDGSSVVASCSTVQADIKKQVAFGGNKEAAELVGKSIAEKAKAAGIESVAFDRSGFKYHGRVQVLADSARENGLQF.

The protein belongs to the universal ribosomal protein uL18 family. Part of the 50S ribosomal subunit; part of the 5S rRNA/L5/L18/L25 subcomplex. Contacts the 5S and 23S rRNAs.

Functionally, this is one of the proteins that bind and probably mediate the attachment of the 5S RNA into the large ribosomal subunit, where it forms part of the central protuberance. The polypeptide is Large ribosomal subunit protein uL18 (Hydrogenovibrio crunogenus (strain DSM 25203 / XCL-2) (Thiomicrospira crunogena)).